We begin with the raw amino-acid sequence, 422 residues long: Lipase member M (422 aa).

The first 33 residues, 1-33 (MSEILSRVWTVSHRVEIWLLILVAYLLQRNVNS), serve as a signal peptide directing secretion. Asparagine 48 is a glycosylation site (N-linked (GlcNAc...) asparagine). One can recognise an AB hydrolase-1 domain in the interval 92 to 392 (PVVLLQHGLL…EWAHVDFIWG (301 aa)). Catalysis depends on serine 186, which acts as the Nucleophile. Cysteine 260 and cysteine 269 form a disulfide bridge. Catalysis depends on charge relay system residues aspartate 357 and histidine 386.

It belongs to the AB hydrolase superfamily. Lipase family.

The protein localises to the secreted. Its function is as follows. Plays a highly specific role in the last step of keratinocyte differentiation. May have an essential function in lipid metabolism of the most differentiated epidermal layers. This Mus musculus (Mouse) protein is Lipase member M (Lipm).